The chain runs to 204 residues: ATP-dependent Clp protease proteolytic subunit (204 aa).

Ser-101 (nucleophile) is an active-site residue. The active site involves His-126.

The protein belongs to the peptidase S14 family. As to quaternary structure, component of the chloroplastic Clp protease core complex.

Its subcellular location is the plastid. It localises to the chloroplast stroma. The enzyme catalyses Hydrolysis of proteins to small peptides in the presence of ATP and magnesium. alpha-casein is the usual test substrate. In the absence of ATP, only oligopeptides shorter than five residues are hydrolyzed (such as succinyl-Leu-Tyr-|-NHMec, and Leu-Tyr-Leu-|-Tyr-Trp, in which cleavage of the -Tyr-|-Leu- and -Tyr-|-Trp bonds also occurs).. Cleaves peptides in various proteins in a process that requires ATP hydrolysis. Has a chymotrypsin-like activity. Plays a major role in the degradation of misfolded proteins. The polypeptide is ATP-dependent Clp protease proteolytic subunit (Phalaenopsis aphrodite subsp. formosana (Moth orchid)).